Here is a 196-residue protein sequence, read N- to C-terminus: Neurensin-1 (196 aa).

Helical transmembrane passes span leucine 67–valine 87 and alanine 121–alanine 141.

The protein belongs to the VMP family. As to expression, expressed predominantly in brain. Also weakly expressed in lung and spleen. In brain, expressed strongly in nerve fibers of the cerebral cortex, anterior cerebral nuclei, hypothalamus, amygdaloid complex, brain stem of the metaencephalon and medulla oblongata, and moderately expressed in soma of neurons of the dentate gyrus of the hippocampus and Purkinje cells of the cerebellum.

Its subcellular location is the membrane. It is found in the cell projection. The protein resides in the neuron projection. Functionally, may play an important role in neural organelle transport, and in transduction of nerve signals or in nerve growth. May play a role in neurite extension. The protein is Neurensin-1 of Mus musculus (Mouse).